Here is a 497-residue protein sequence, read N- to C-terminus: Acetyl-coenzyme A carboxylase carboxyl transferase subunit beta, chloroplastic (497 aa).

The region spanning 230 to 497 is the CoA carboxyltransferase N-terminal domain; it reads LWIQCENCYG…FFPLNQNSIK (268 aa). Zn(2+) is bound by residues Cys-234, Cys-237, Cys-253, and Cys-256. The segment at 234–256 adopts a C4-type zinc-finger fold; the sequence is CENCYGLNYKKFFRSKMNICEQC.

This sequence belongs to the AccD/PCCB family. As to quaternary structure, acetyl-CoA carboxylase is a heterohexamer composed of biotin carboxyl carrier protein, biotin carboxylase and 2 subunits each of ACCase subunit alpha and ACCase plastid-coded subunit beta (accD). The cofactor is Zn(2+).

The protein resides in the plastid. It is found in the chloroplast stroma. The catalysed reaction is N(6)-carboxybiotinyl-L-lysyl-[protein] + acetyl-CoA = N(6)-biotinyl-L-lysyl-[protein] + malonyl-CoA. Its pathway is lipid metabolism; malonyl-CoA biosynthesis; malonyl-CoA from acetyl-CoA: step 1/1. In terms of biological role, component of the acetyl coenzyme A carboxylase (ACC) complex. Biotin carboxylase (BC) catalyzes the carboxylation of biotin on its carrier protein (BCCP) and then the CO(2) group is transferred by the transcarboxylase to acetyl-CoA to form malonyl-CoA. The polypeptide is Acetyl-coenzyme A carboxylase carboxyl transferase subunit beta, chloroplastic (Platanus occidentalis (Sycamore)).